We begin with the raw amino-acid sequence, 162 residues long: Lipid droplet assembly factor 1-A (162 aa).

At 1-42 (MASAENLYQEKMQELQKQMNKVMQTINNHSKVEAFLNSPFGQ) the chain is on the cytoplasmic side. A helical transmembrane segment spans residues 43–63 (YLDQHPFVTLSLLVFISLSAV). Residues 64-65 (PV) lie on the Lumenal side of the membrane. A helical transmembrane segment spans residues 66-86 (GIFLTLIAGTAIAVCLAVLII). A topological domain (cytoplasmic) is located at residue Glu87. Residues 88 to 108 (GIVISVGGIALLCILCGLAVM) form a helical membrane-spanning segment. Position 109 (Ser109) is a topological domain, lumenal. A helical membrane pass occupies residues 110–130 (LGVAAVLCVSYVAGSSVLNYI). Topologically, residues 131 to 162 (HAYRVTVGTRGRSGPISLNHETTTAEKSYRSS) are cytoplasmic.

Belongs to the LDAF1 family.

Its subcellular location is the endoplasmic reticulum membrane. It localises to the lipid droplet. Its function is as follows. Plays an important role in the formation of lipid droplets (LD) which are storage organelles at the center of lipid and energy homeostasis. The protein is Lipid droplet assembly factor 1-A of Xenopus laevis (African clawed frog).